The following is a 343-amino-acid chain: Phosphate acyltransferase (343 aa).

Belongs to the PlsX family. As to quaternary structure, homodimer. Probably interacts with PlsY.

The protein localises to the cytoplasm. It carries out the reaction a fatty acyl-[ACP] + phosphate = an acyl phosphate + holo-[ACP]. It participates in lipid metabolism; phospholipid metabolism. Functionally, catalyzes the reversible formation of acyl-phosphate (acyl-PO(4)) from acyl-[acyl-carrier-protein] (acyl-ACP). This enzyme utilizes acyl-ACP as fatty acyl donor, but not acyl-CoA. The protein is Phosphate acyltransferase of Acidovorax sp. (strain JS42).